Consider the following 441-residue polypeptide: Amino-acid acetyltransferase (441 aa).

Positions 295–434 (EQVRRATIND…QELYNYQRRS (140 aa)) constitute an N-acetyltransferase domain.

The protein belongs to the acetyltransferase family. ArgA subfamily. As to quaternary structure, homohexamer.

The protein resides in the cytoplasm. The catalysed reaction is L-glutamate + acetyl-CoA = N-acetyl-L-glutamate + CoA + H(+). It participates in amino-acid biosynthesis; L-arginine biosynthesis; N(2)-acetyl-L-ornithine from L-glutamate: step 1/4. The polypeptide is Amino-acid acetyltransferase (Yersinia enterocolitica serotype O:8 / biotype 1B (strain NCTC 13174 / 8081)).